Reading from the N-terminus, the 1159-residue chain is WASH complex subunit 5 (1159 aa).

It belongs to the strumpellin family. As to quaternary structure, component of the WASH complex.

It is found in the early endosome. Acts at least in part as component of the WASH complex which seems to regulate washc1 nucleation-promoting factor (NPF) activity and is required for its membrane targeting during endosomal sorting. This Xenopus tropicalis (Western clawed frog) protein is WASH complex subunit 5.